A 45-amino-acid polypeptide reads, in one-letter code: C-phycocyanin beta subunit (45 aa).

Belongs to the phycobiliprotein family. As to quaternary structure, heterodimer of an alpha and a beta subunit. The hererodimer further assembles into trimers and the trimers into hexamers. In terms of processing, contains two covalently linked bilin chromophores.

It localises to the cellular thylakoid membrane. In terms of biological role, light-harvesting photosynthetic bile pigment-protein from the phycobiliprotein complex (phycobilisome, PBS). Phycocyanin is the major phycobiliprotein in the PBS rod. This is C-phycocyanin beta subunit (cpcB) from Limnospira fusiformis (Arthrospira fusiformis).